The chain runs to 497 residues: uncharacterized protein (497 aa).

Transmembrane regions (helical) follow at residues 91-111, 119-139, 149-169, 179-199, 215-235, 283-303, 319-339, 347-367, 374-394, 406-426, and 439-459; these read WVGTSFYLGFMVFSLPLSTLL, VTSAFIVAWGILMTLTCLVHS, LLGILESVITPAFVLFIAQWY, AFLVAWNGLGGLIGGSMSYGL, ILFIITGLITIINGVFIFIHI, MYLYFFLQIAVAIPNGGLSNF, LLMNMPTSSISFAALTLFGLI, MDIALVGLAINLTSGSLIAFA, LAGYWLFGISPIPYICILSCI, FMSAVSMIGYCVGNMVGPQTF, and VSFVVCYCVAIFIIIAIYAVN.

Belongs to the major facilitator superfamily. Allantoate permease family.

The protein localises to the golgi apparatus. The protein resides in the membrane. This is an uncharacterized protein from Schizosaccharomyces pombe (strain 972 / ATCC 24843) (Fission yeast).